Reading from the N-terminus, the 1016-residue chain is Kinesin-like protein KIN-14K (1016 aa).

Residues 14-121 (ADRRAEVIEW…CLLVLRESVS (108 aa)) enclose the Calponin-homology (CH) domain. Residues 123-176 (GLRDGTSKAPLRKKWRVPETGEPLVPGVAQGKTSPGEDKRNGLPDPKSQQKTPI) form a disordered region. A coiled-coil region spans residues 288-354 (VNGTNEENQM…EVMTSMHEQQ (67 aa)). In terms of domain architecture, Kinesin motor spans 481 to 808 (NIRVYCRVRP…LKFAERVSGV (328 aa)). 565–572 (GQTGSGKT) serves as a coordination point for ATP. A coiled-coil region spans residues 820–852 (KDIKELLEQVASLKDTIVRKDTEIEQLQLMKDK). 2 stretches are compositionally biased toward polar residues: residues 884–893 (NQQSQLSDPQ) and 990–1004 (KTPNQTRVQSSQLIG). 2 disordered regions span residues 884–912 (NQQSQLSDPQSYAEVNRDGGPTSYTDITP) and 971–1016 (LTKN…RWQK).

This sequence belongs to the TRAFAC class myosin-kinesin ATPase superfamily. Kinesin family. KIN-14 subfamily.

In Oryza sativa subsp. japonica (Rice), this protein is Kinesin-like protein KIN-14K.